The following is a 271-amino-acid chain: OX-2 membrane glycoprotein homolog (271 aa).

A signal peptide spans 1–24; sequence MSSLFISLPWVAFIWLALLGAVGG. The Extracellular segment spans residues 25–227; sequence ARVQGPMRGS…QGPLAHDLPA (203 aa). Residues 26–129 form the Ig-like V-type domain; the sequence is RVQGPMRGSA…SCTACLEVTS (104 aa). A disulfide bond links Cys-39 and Cys-109. N-linked (GlcNAc...) asparagine; by host glycans are attached at residues Asn-83, Asn-91, Asn-138, Asn-157, Asn-166, and Asn-208. Positions 130-220 constitute an Ig-like C2-type domain; sequence PPTGHVQVNS…ISIPASIQGP (91 aa). Cys-148 and Cys-202 are disulfide-bonded. Residues 228–248 traverse the membrane as a helical segment; the sequence is AQGTLAGVAITLVGLFGIFAL. Residues 249 to 271 are Cytoplasmic-facing; the sequence is HHCRRKQGGASPTSDDMDPLSTQ.

Interacts with human CD200R1. Post-translationally, N-glycosylated.

Its subcellular location is the host cell membrane. Dramatically stimulates primary monocytes, macrophages, and dendritic cells to produce the inflammatory cytokines interleukin 1-beta, IL-6, monocyte chemoattractant protein 1, and TNF-alpha. The induction of inflammatory cytokine production potentially promotes the cytokine-mediated angiogenic proliferation of KSHV-infected cells. The protein is OX-2 membrane glycoprotein homolog (K14) of Human herpesvirus 8 type P (isolate GK18) (HHV-8).